Reading from the N-terminus, the 123-residue chain is Dihydroneopterin triphosphate 2'-epimerase (123 aa).

It belongs to the DHNA family. In terms of assembly, homooctamer. Dimer of tetramers.

It carries out the reaction 7,8-dihydroneopterin 3'-triphosphate = 7,8-dihydromonapterin 3'-triphosphate. In terms of biological role, catalyzes the epimerization of carbon 2' of the side chain of 7,8-dihydroneopterin triphosphate (H2NTP) to form 7,8-dihydromonapterin triphosphate (H2MTP). Is required for tetrahydromonapterin biosynthesis. The polypeptide is Dihydroneopterin triphosphate 2'-epimerase (Pseudomonas aeruginosa (strain ATCC 15692 / DSM 22644 / CIP 104116 / JCM 14847 / LMG 12228 / 1C / PRS 101 / PAO1)).